The following is a 123-amino-acid chain: Large ribosomal subunit protein uL18 (123 aa).

This sequence belongs to the universal ribosomal protein uL18 family. As to quaternary structure, part of the 50S ribosomal subunit; part of the 5S rRNA/L5/L18/L25 subcomplex. Contacts the 5S and 23S rRNAs.

Its function is as follows. This is one of the proteins that bind and probably mediate the attachment of the 5S RNA into the large ribosomal subunit, where it forms part of the central protuberance. The chain is Large ribosomal subunit protein uL18 from Chlamydia abortus (strain DSM 27085 / S26/3) (Chlamydophila abortus).